The chain runs to 415 residues: Serine hydroxymethyltransferase (415 aa).

Residues leucine 117 and 121–123 (GHL) each bind (6S)-5,6,7,8-tetrahydrofolate. Lysine 226 carries the N6-(pyridoxal phosphate)lysine modification.

It belongs to the SHMT family. As to quaternary structure, homodimer. It depends on pyridoxal 5'-phosphate as a cofactor.

It localises to the cytoplasm. It carries out the reaction (6R)-5,10-methylene-5,6,7,8-tetrahydrofolate + glycine + H2O = (6S)-5,6,7,8-tetrahydrofolate + L-serine. It functions in the pathway one-carbon metabolism; tetrahydrofolate interconversion. Its pathway is amino-acid biosynthesis; glycine biosynthesis; glycine from L-serine: step 1/1. Its function is as follows. Catalyzes the reversible interconversion of serine and glycine with tetrahydrofolate (THF) serving as the one-carbon carrier. This reaction serves as the major source of one-carbon groups required for the biosynthesis of purines, thymidylate, methionine, and other important biomolecules. Also exhibits THF-independent aldolase activity toward beta-hydroxyamino acids, producing glycine and aldehydes, via a retro-aldol mechanism. This Leptospira borgpetersenii serovar Hardjo-bovis (strain JB197) protein is Serine hydroxymethyltransferase.